We begin with the raw amino-acid sequence, 82 residues long: Sulfur carrier protein TusA (82 aa).

Catalysis depends on Cys-19, which acts as the Cysteine persulfide intermediate.

The protein belongs to the sulfur carrier protein TusA family.

It is found in the cytoplasm. Sulfur carrier protein which probably makes part of a sulfur-relay system. The polypeptide is Sulfur carrier protein TusA (Vibrio cholerae serotype O1 (strain ATCC 39541 / Classical Ogawa 395 / O395)).